A 390-amino-acid polypeptide reads, in one-letter code: Chorismate synthase 2 (390 aa).

Residues arginine 39 and arginine 45 each contribute to the NADP(+) site. Residues 132 to 134 (RSS), 253 to 254 (NA), glycine 298, 313 to 317 (KPIPT), and arginine 339 contribute to the FMN site.

The protein belongs to the chorismate synthase family. As to quaternary structure, homotetramer. FMNH2 serves as cofactor.

The enzyme catalyses 5-O-(1-carboxyvinyl)-3-phosphoshikimate = chorismate + phosphate. Its pathway is metabolic intermediate biosynthesis; chorismate biosynthesis; chorismate from D-erythrose 4-phosphate and phosphoenolpyruvate: step 7/7. Functionally, catalyzes the anti-1,4-elimination of the C-3 phosphate and the C-6 proR hydrogen from 5-enolpyruvylshikimate-3-phosphate (EPSP) to yield chorismate, which is the branch point compound that serves as the starting substrate for the three terminal pathways of aromatic amino acid biosynthesis. This reaction introduces a second double bond into the aromatic ring system. This is Chorismate synthase 2 from Bacillus thuringiensis subsp. konkukian (strain 97-27).